An 843-amino-acid polypeptide reads, in one-letter code: Protein P (843 aa).

A terminal protein domain (TP) region spans residues 1-177 (MPLSYQHFRK…FCGSPYSWEQ (177 aa)). Residues 178-346 (DLQHGRLVFQ…YCLYHIVNLI (169 aa)) form a spacer region. The tract at residues 219–250 (RKSRLGPQPAQGQLAGRQQGGSGSIRARVHPS) is disordered. Residues 223–235 (LGPQPAQGQLAGR) are compositionally biased toward low complexity. The interval 347–690 (EDWGPCTEHG…YLNLYPVARQ (344 aa)) is polymerase/reverse transcriptase domain (RT). Residues 357–600 (EHRIRTPRTP…YSLNFMGYVI (244 aa)) form the Reverse transcriptase domain. Mg(2+) contacts are provided by aspartate 429, aspartate 551, and aspartate 552.

The protein belongs to the hepadnaviridae P protein family.

It carries out the reaction DNA(n) + a 2'-deoxyribonucleoside 5'-triphosphate = DNA(n+1) + diphosphate. It catalyses the reaction Endonucleolytic cleavage to 5'-phosphomonoester.. With respect to regulation, activated by host HSP70 and HSP40 in vitro to be able to bind the epsilon loop of the pgRNA. Because deletion of the RNase H region renders the protein partly chaperone-independent, the chaperones may be needed indirectly to relieve occlusion of the RNA-binding site by this domain. Inhibited by several reverse-transcriptase inhibitors: Lamivudine, Adefovir and Entecavir. Functionally, multifunctional enzyme that converts the viral RNA genome into dsDNA in viral cytoplasmic capsids. This enzyme displays a DNA polymerase activity that can copy either DNA or RNA templates, and a ribonuclease H (RNase H) activity that cleaves the RNA strand of RNA-DNA heteroduplexes in a partially processive 3'- to 5'-endonucleasic mode. Neo-synthesized pregenomic RNA (pgRNA) are encapsidated together with the P protein, and reverse-transcribed inside the nucleocapsid. Initiation of reverse-transcription occurs first by binding the epsilon loop on the pgRNA genome, and is initiated by protein priming, thereby the 5'-end of (-)DNA is covalently linked to P protein. Partial (+)DNA is synthesized from the (-)DNA template and generates the relaxed circular DNA (RC-DNA) genome. After budding and infection, the RC-DNA migrates in the nucleus, and is converted into a plasmid-like covalently closed circular DNA (cccDNA). The activity of P protein does not seem to be necessary for cccDNA generation, and is presumably released from (+)DNA by host nuclear DNA repair machinery. This chain is Protein P, found in Hepatitis B virus genotype B2 (isolate Vietnam/16091/1992) (HBV-B).